Here is a 251-residue protein sequence, read N- to C-terminus: 4-hydroxy-tetrahydrodipicolinate reductase (251 aa).

Residues 8 to 13 (GAKGRM), 76 to 78 (GTT), and 106 to 109 (APNF) contribute to the NAD(+) site. Catalysis depends on H136, which acts as the Proton donor/acceptor. H137 is a binding site for (S)-2,3,4,5-tetrahydrodipicolinate. K140 functions as the Proton donor in the catalytic mechanism. Residue 146–147 (GT) participates in (S)-2,3,4,5-tetrahydrodipicolinate binding.

The protein belongs to the DapB family.

The protein resides in the cytoplasm. It catalyses the reaction (S)-2,3,4,5-tetrahydrodipicolinate + NAD(+) + H2O = (2S,4S)-4-hydroxy-2,3,4,5-tetrahydrodipicolinate + NADH + H(+). The catalysed reaction is (S)-2,3,4,5-tetrahydrodipicolinate + NADP(+) + H2O = (2S,4S)-4-hydroxy-2,3,4,5-tetrahydrodipicolinate + NADPH + H(+). Its pathway is amino-acid biosynthesis; L-lysine biosynthesis via DAP pathway; (S)-tetrahydrodipicolinate from L-aspartate: step 4/4. Catalyzes the conversion of 4-hydroxy-tetrahydrodipicolinate (HTPA) to tetrahydrodipicolinate. This chain is 4-hydroxy-tetrahydrodipicolinate reductase, found in Bifidobacterium longum subsp. infantis (strain ATCC 15697 / DSM 20088 / JCM 1222 / NCTC 11817 / S12).